The following is a 489-amino-acid chain: Acetyl-coenzyme A carboxylase carboxyl transferase subunit beta, chloroplastic (489 aa).

In terms of domain architecture, CoA carboxyltransferase N-terminal spans 225-489 (LWIQCDNCYG…FFPLNKNEIK (265 aa)). 4 residues coordinate Zn(2+): Cys229, Cys232, Cys245, and Cys248. Residues 229 to 248 (CDNCYGLKYKKVEMNVCEEC) form a C4-type zinc finger.

This sequence belongs to the AccD/PCCB family. As to quaternary structure, acetyl-CoA carboxylase is a heterohexamer composed of biotin carboxyl carrier protein, biotin carboxylase and 2 subunits each of ACCase subunit alpha and ACCase plastid-coded subunit beta (accD). It depends on Zn(2+) as a cofactor.

The protein localises to the plastid. The protein resides in the chloroplast stroma. It catalyses the reaction N(6)-carboxybiotinyl-L-lysyl-[protein] + acetyl-CoA = N(6)-biotinyl-L-lysyl-[protein] + malonyl-CoA. It participates in lipid metabolism; malonyl-CoA biosynthesis; malonyl-CoA from acetyl-CoA: step 1/1. Functionally, component of the acetyl coenzyme A carboxylase (ACC) complex. Biotin carboxylase (BC) catalyzes the carboxylation of biotin on its carrier protein (BCCP) and then the CO(2) group is transferred by the transcarboxylase to acetyl-CoA to form malonyl-CoA. The protein is Acetyl-coenzyme A carboxylase carboxyl transferase subunit beta, chloroplastic of Brassica napus (Rape).